A 324-amino-acid polypeptide reads, in one-letter code: MHFLVALVLLGQIIGSTLSSQVRGDLECNDREAKEWADQAVRYINEHKLHEYKQALNVIKNIVVVPWNGDLVAVFLKLNLLETECHVLDPTPVEKCTIRPQQNHAVEMDCDAKIMFDVETFKQDVFVKCHSTPDSVEDVRRNCLKCPILLSPSDPHVVDSVEYVLNKHNEQLSGHVYEVLEISRGQHKYEPEAFYVEFAIVEVNCTAQEAHDDHHHCHPNTAGEDHIAFCKATVFRSHASLEKPKHENFESDCVILDVKEGHAHSHLIEHHIGKYSTSPGQNSTVECVAECPVAFVNKEVPTDISDRHTTPVKGCPGKILHFQL.

Residues 1-19 (MHFLVALVLLGQIIGSTLS) form the signal peptide. Cystatin fetuin-A-type domains are found at residues 22–130 (VRGD…VKCH) and 141–254 (RNCL…SDCV). The Cell attachment site motif lies at 23 to 25 (RGD). 7 disulfides stabilise this stretch: Cys28/Cys315, Cys85/Cys96, Cys110/Cys129, Cys143/Cys146, Cys205/Cys217, Cys230/Cys253, and Cys287/Cys291. N-linked (GlcNAc...) asparagine glycosylation occurs at Asn204. A glycan (N-linked (GlcNAc...) asparagine) is linked at Asn282.

Homodimer. In terms of tissue distribution, expressed by the liver.

It is found in the secreted. Its function is as follows. Suppress hemorrhage induced by metalloproteinases from the same venom (brevilysin-H3, -H4, -H6) and from habu venom (metalloproteinases HR1A and HR1B). The non-hemorrhagic brevilysin-L4 is not inhibited by cMSF. Does not inhibit serine and cysteine proteases such as trypsin, chymotrypsin, thermolysin, and papain. The inhibition may occur by formation of a non-covalent complex between this protein and the proteinases at their metalloproteinase domains. This Gloydius brevicauda (Korean slamosa snake) protein is Antihemorrhagic factor cMSF.